The chain runs to 723 residues: Polyribonucleotide nucleotidyltransferase (723 aa).

Aspartate 488 and aspartate 494 together coordinate Mg(2+). The KH domain occupies 555 to 614; that stretch reads PRMITMKIHPDKIREVIGKGGSTIQALTKETGTTIDIQEDGTITIASTSTDGMAEAKRRI. Residues 624-692 form the S1 motif domain; sequence GKIYAGTVLK…EKGRLRLSLK (69 aa). Positions 701–723 are disordered; it reads SISPINAGEAAAPAAPAEGSEQQ. Low complexity predominate over residues 707–723; that stretch reads AGEAAAPAAPAEGSEQQ.

Belongs to the polyribonucleotide nucleotidyltransferase family. The cofactor is Mg(2+).

It is found in the cytoplasm. It carries out the reaction RNA(n+1) + phosphate = RNA(n) + a ribonucleoside 5'-diphosphate. Its function is as follows. Involved in mRNA degradation. Catalyzes the phosphorolysis of single-stranded polyribonucleotides processively in the 3'- to 5'-direction. The chain is Polyribonucleotide nucleotidyltransferase from Cupriavidus necator (strain ATCC 17699 / DSM 428 / KCTC 22496 / NCIMB 10442 / H16 / Stanier 337) (Ralstonia eutropha).